A 122-amino-acid polypeptide reads, in one-letter code: Large ribosomal subunit protein uL14 (122 aa).

This sequence belongs to the universal ribosomal protein uL14 family. As to quaternary structure, part of the 50S ribosomal subunit. Forms a cluster with proteins L3 and L19. In the 70S ribosome, L14 and L19 interact and together make contacts with the 16S rRNA in bridges B5 and B8.

In terms of biological role, binds to 23S rRNA. Forms part of two intersubunit bridges in the 70S ribosome. The protein is Large ribosomal subunit protein uL14 of Acinetobacter baumannii (strain AB307-0294).